The primary structure comprises 436 residues: 3-ketoacyl-CoA thiolase (436 aa).

The Acyl-thioester intermediate role is filled by cysteine 99. Residues histidine 392 and cysteine 422 each act as proton acceptor in the active site.

Belongs to the thiolase-like superfamily. Thiolase family. As to quaternary structure, heterotetramer of two alpha chains (FadJ) and two beta chains (FadI).

It localises to the cytoplasm. It carries out the reaction an acyl-CoA + acetyl-CoA = a 3-oxoacyl-CoA + CoA. It functions in the pathway lipid metabolism; fatty acid beta-oxidation. Its function is as follows. Catalyzes the final step of fatty acid oxidation in which acetyl-CoA is released and the CoA ester of a fatty acid two carbons shorter is formed. The sequence is that of 3-ketoacyl-CoA thiolase from Escherichia coli O8 (strain IAI1).